The chain runs to 299 residues: Oxygen-dependent coproporphyrinogen-III oxidase (299 aa).

Ser-92 contacts substrate. Positions 96 and 106 each coordinate a divalent metal cation. His-106 functions as the Proton donor in the catalytic mechanism. 108 to 110 (NVR) serves as a coordination point for substrate. Positions 145 and 175 each coordinate a divalent metal cation. Residues 240 to 275 (YVEFNLVWDRGTLFGLQTGGRTESILMSMPPLVRWE) are important for dimerization. 258–260 (GGR) contacts substrate.

It belongs to the aerobic coproporphyrinogen-III oxidase family. As to quaternary structure, homodimer. It depends on a divalent metal cation as a cofactor.

The protein resides in the cytoplasm. The catalysed reaction is coproporphyrinogen III + O2 + 2 H(+) = protoporphyrinogen IX + 2 CO2 + 2 H2O. Its pathway is porphyrin-containing compound metabolism; protoporphyrin-IX biosynthesis; protoporphyrinogen-IX from coproporphyrinogen-III (O2 route): step 1/1. Involved in the heme biosynthesis. Catalyzes the aerobic oxidative decarboxylation of propionate groups of rings A and B of coproporphyrinogen-III to yield the vinyl groups in protoporphyrinogen-IX. This Shigella boydii serotype 18 (strain CDC 3083-94 / BS512) protein is Oxygen-dependent coproporphyrinogen-III oxidase.